A 225-amino-acid chain; its full sequence is Ribonuclease 3 (225 aa).

The RNase III domain occupies 5–127 (IEKLTRQLGY…IIGAVYLDSD (123 aa)). Glutamate 40 is a Mg(2+) binding site. Residue aspartate 44 is part of the active site. Aspartate 113 and glutamate 116 together coordinate Mg(2+). The active site involves glutamate 116. The DRBM domain occupies 154-224 (DPKTRLQEFL…AELALEQLTN (71 aa)).

This sequence belongs to the ribonuclease III family. As to quaternary structure, homodimer. Mg(2+) is required as a cofactor.

The protein localises to the cytoplasm. The catalysed reaction is Endonucleolytic cleavage to 5'-phosphomonoester.. Digests double-stranded RNA. Involved in the processing of primary rRNA transcript to yield the immediate precursors to the large and small rRNAs (23S and 16S). Processes some mRNAs, and tRNAs when they are encoded in the rRNA operon. Processes pre-crRNA and tracrRNA of type II CRISPR loci if present in the organism. The chain is Ribonuclease 3 from Vibrio vulnificus (strain CMCP6).